A 118-amino-acid chain; its full sequence is Large ribosomal subunit protein bL19 (118 aa).

Belongs to the bacterial ribosomal protein bL19 family.

Functionally, this protein is located at the 30S-50S ribosomal subunit interface and may play a role in the structure and function of the aminoacyl-tRNA binding site. In Helicobacter acinonychis (strain Sheeba), this protein is Large ribosomal subunit protein bL19.